Consider the following 211-residue polypeptide: Protein-L-isoaspartate O-methyltransferase (211 aa).

Serine 62 is an active-site residue.

It belongs to the methyltransferase superfamily. L-isoaspartyl/D-aspartyl protein methyltransferase family.

It is found in the cytoplasm. It carries out the reaction [protein]-L-isoaspartate + S-adenosyl-L-methionine = [protein]-L-isoaspartate alpha-methyl ester + S-adenosyl-L-homocysteine. Catalyzes the methyl esterification of L-isoaspartyl residues in peptides and proteins that result from spontaneous decomposition of normal L-aspartyl and L-asparaginyl residues. It plays a role in the repair and/or degradation of damaged proteins. This chain is Protein-L-isoaspartate O-methyltransferase, found in Shewanella baltica (strain OS195).